The sequence spans 438 residues: Putative hydrolase MSMEG_3995/MSMEI_3903 (438 aa).

Zn(2+) is bound by residues Asp95, Asp104, Glu143, and His208. Residue Lys217 forms an Isoglutamyl lysine isopeptide (Lys-Gln) (interchain with Q-Cter in protein Pup) linkage. His400 provides a ligand contact to Zn(2+).

It belongs to the peptidase M20 family. It depends on Zn(2+) as a cofactor.

In Mycolicibacterium smegmatis (strain ATCC 700084 / mc(2)155) (Mycobacterium smegmatis), this protein is Putative hydrolase MSMEG_3995/MSMEI_3903.